The sequence spans 442 residues: 3-phosphoshikimate 1-carboxyvinyltransferase (442 aa).

3 residues coordinate 3-phosphoshikimate: lysine 25, serine 26, and arginine 30. A phosphoenolpyruvate-binding site is contributed by lysine 25. Phosphoenolpyruvate is bound by residues glycine 96 and arginine 124. Serine 171, serine 172, glutamine 173, serine 203, aspartate 325, and lysine 352 together coordinate 3-phosphoshikimate. Glutamine 173 contributes to the phosphoenolpyruvate binding site. The active-site Proton acceptor is aspartate 325. 3 residues coordinate phosphoenolpyruvate: arginine 356, arginine 400, and lysine 425.

Belongs to the EPSP synthase family. As to quaternary structure, monomer.

It is found in the cytoplasm. The enzyme catalyses 3-phosphoshikimate + phosphoenolpyruvate = 5-O-(1-carboxyvinyl)-3-phosphoshikimate + phosphate. Its pathway is metabolic intermediate biosynthesis; chorismate biosynthesis; chorismate from D-erythrose 4-phosphate and phosphoenolpyruvate: step 6/7. Catalyzes the transfer of the enolpyruvyl moiety of phosphoenolpyruvate (PEP) to the 5-hydroxyl of shikimate-3-phosphate (S3P) to produce enolpyruvyl shikimate-3-phosphate and inorganic phosphate. The polypeptide is 3-phosphoshikimate 1-carboxyvinyltransferase (Bordetella pertussis (strain Tohama I / ATCC BAA-589 / NCTC 13251)).